Consider the following 847-residue polypeptide: Matrin-3 (847 aa).

Serine 2 carries the N-acetylserine modification. Lysine 3 carries the post-translational modification N6-acetyllysine; alternate. Lysine 3 is covalently cross-linked (Glycyl lysine isopeptide (Lys-Gly) (interchain with G-Cter in SUMO2); alternate). Serine 4, serine 9, serine 11, serine 14, serine 22, serine 41, serine 118, and serine 126 each carry phosphoserine. Residues lysine 132 and lysine 146 each participate in a glycyl lysine isopeptide (Lys-Gly) (interchain with G-Cter in SUMO2) cross-link. Disordered stretches follow at residues lysine 146–proline 174 and aspartate 187–tyrosine 214. A Phosphothreonine modification is found at threonine 150. Serine 157 carries the post-translational modification Phosphoserine. Residue tyrosine 158 is modified to Phosphotyrosine. Over residues arginine 160–proline 174 the composition is skewed to basic and acidic residues. Phosphoserine occurs at positions 164, 188, and 195. Residues aspartate 201–tyrosine 214 show a composition bias toward basic and acidic residues. Residue tyrosine 202 is modified to Phosphotyrosine. Serine 206, serine 208, and serine 211 each carry phosphoserine. Tyrosine 219 bears the Phosphotyrosine mark. Serine 234 bears the Phosphoserine mark. A Glycyl lysine isopeptide (Lys-Gly) (interchain with G-Cter in SUMO2) cross-link involves residue lysine 245. The residue at position 264 (serine 264) is a Phosphoserine. Residue lysine 269 forms a Glycyl lysine isopeptide (Lys-Gly) (interchain with G-Cter in SUMO2) linkage. The residue at position 275 (serine 275) is a Phosphoserine. A disordered region spans residues proline 342 to valine 394. An RRM 1 domain is found at arginine 398–lysine 473. Glycyl lysine isopeptide (Lys-Gly) (interchain with G-Cter in SUMO2) cross-links involve residues lysine 478, lysine 487, and lysine 491. Positions arginine 496–lysine 571 constitute an RRM 2 domain. Serine 509 and serine 511 each carry phosphoserine. Lysine 515 participates in a covalent cross-link: Glycyl lysine isopeptide (Lys-Gly) (interchain with G-Cter in SUMO2). Lysine 522 is subject to N6-acetyllysine; alternate. A Glycyl lysine isopeptide (Lys-Gly) (interchain with G-Cter in SUMO2); alternate cross-link involves residue lysine 522. Serine 533 bears the Phosphoserine mark. Glycyl lysine isopeptide (Lys-Gly) (interchain with G-Cter in SUMO2) cross-links involve residues lysine 554 and lysine 555. An N6-acetyllysine modification is found at lysine 571. The disordered stretch occupies residues lysine 588–proline 786. Phosphoserine occurs at positions 596, 598, 604, and 606. The span at aspartate 600–glutamine 643 shows a compositional bias: basic and acidic residues. Residues lysine 617 and lysine 630 each participate in a glycyl lysine isopeptide (Lys-Gly) (interchain with G-Cter in SUMO2) cross-link. Residues glutamate 653–alanine 665 show a composition bias toward acidic residues. Phosphoserine is present on residues serine 654, serine 671, serine 673, and serine 674. A compositionally biased stretch (low complexity) spans alanine 666–glycine 676. Threonine 679 bears the Phosphothreonine mark. Residue serine 689 is modified to Phosphoserine. The segment covering serine 689–glycine 704 has biased composition (basic and acidic residues). The Nuclear localization signal signature appears at alanine 710–aspartate 718. Glycyl lysine isopeptide (Lys-Gly) (interchain with G-Cter in SUMO2) cross-links involve residues lysine 719 and lysine 736. A Phosphothreonine modification is found at threonine 741. Phosphoserine is present on residues serine 747, serine 759, and serine 766. Over residues aspartate 767 to arginine 780 the composition is skewed to basic and acidic residues. A Glycyl lysine isopeptide (Lys-Gly) (interchain with G-Cter in SUMO2) cross-link involves residue lysine 770. A Matrin-type zinc finger spans residues phenylalanine 801–lysine 832. The residue at position 836 (lysine 836) is an N6-acetyllysine; alternate. Lysine 836 participates in a covalent cross-link: Glycyl lysine isopeptide (Lys-Gly) (interchain with G-Cter in SUMO2); alternate.

Part of a complex consisting of SFPQ, NONO and MATR3. Interacts with AGO1 and AGO2. Part of a complex composed at least of ASH2L, EMSY, HCFC1, HSPA8, CCAR2, MATR3, MKI67, RBBP5, TUBB2A, WDR5 and ZNF335; this complex may have a histone H3-specific methyltransferase activity. Interacts with TARDBP. Part of the HDP-RNP complex composed of at least HEXIM1, PRKDC, XRCC5, XRCC6, paraspeckle proteins (SFPQ, NONO, PSPC1, RBM14, and MATR3) and NEAT1 RNA. Interacts with FUS. Interacts with IGF2BP1; the interaction is enhanced by SEPIN14P20 peptide RBPR. Interacts with IGF2BP2 and IGF2BP3. Interacts with RBPMS.

Its subcellular location is the nucleus matrix. May play a role in transcription or may interact with other nuclear matrix proteins to form the internal fibrogranular network. In association with the SFPQ-NONO heteromer may play a role in nuclear retention of defective RNAs. Plays a role in the regulation of DNA virus-mediated innate immune response by assembling into the HDP-RNP complex, a complex that serves as a platform for IRF3 phosphorylation and subsequent innate immune response activation through the cGAS-STING pathway. Binds to N6-methyladenosine (m6A)-containing mRNAs and contributes to MYC stability by binding to m6A-containing MYC mRNAs. May bind to specific miRNA hairpins. The sequence is that of Matrin-3 (MATR3) from Homo sapiens (Human).